Consider the following 157-residue polypeptide: Ribosome maturation factor RimP (157 aa).

This sequence belongs to the RimP family.

Its subcellular location is the cytoplasm. Required for maturation of 30S ribosomal subunits. This Levilactobacillus brevis (strain ATCC 367 / BCRC 12310 / CIP 105137 / JCM 1170 / LMG 11437 / NCIMB 947 / NCTC 947) (Lactobacillus brevis) protein is Ribosome maturation factor RimP.